A 194-amino-acid polypeptide reads, in one-letter code: Large ribosomal subunit protein bL25 (194 aa).

Belongs to the bacterial ribosomal protein bL25 family. CTC subfamily. Part of the 50S ribosomal subunit; part of the 5S rRNA/L5/L18/L25 subcomplex. Contacts the 5S rRNA. Binds to the 5S rRNA independently of L5 and L18.

Functionally, this is one of the proteins that binds to the 5S RNA in the ribosome where it forms part of the central protuberance. The protein is Large ribosomal subunit protein bL25 of Parabacteroides distasonis (strain ATCC 8503 / DSM 20701 / CIP 104284 / JCM 5825 / NCTC 11152).